We begin with the raw amino-acid sequence, 304 residues long: Acetyl-coenzyme A carboxylase carboxyl transferase subunit beta (304 aa).

The CoA carboxyltransferase N-terminal domain occupies 23 to 292 (VWTKCDSCGQ…PNPEAPREGV (270 aa)). Positions 27, 30, 46, and 49 each coordinate Zn(2+). The segment at 27 to 49 (CDSCGQVLYRAELERNLEVCPKC) adopts a C4-type zinc-finger fold. Residues 285–304 (PEAPREGVVVPPVPDQEPEA) are disordered. The span at 295–304 (PPVPDQEPEA) shows a compositional bias: pro residues.

The protein belongs to the AccD/PCCB family. Acetyl-CoA carboxylase is a heterohexamer composed of biotin carboxyl carrier protein (AccB), biotin carboxylase (AccC) and two subunits each of ACCase subunit alpha (AccA) and ACCase subunit beta (AccD). The cofactor is Zn(2+).

It is found in the cytoplasm. The catalysed reaction is N(6)-carboxybiotinyl-L-lysyl-[protein] + acetyl-CoA = N(6)-biotinyl-L-lysyl-[protein] + malonyl-CoA. The protein operates within lipid metabolism; malonyl-CoA biosynthesis; malonyl-CoA from acetyl-CoA: step 1/1. Functionally, component of the acetyl coenzyme A carboxylase (ACC) complex. Biotin carboxylase (BC) catalyzes the carboxylation of biotin on its carrier protein (BCCP) and then the CO(2) group is transferred by the transcarboxylase to acetyl-CoA to form malonyl-CoA. The chain is Acetyl-coenzyme A carboxylase carboxyl transferase subunit beta from Escherichia coli O6:H1 (strain CFT073 / ATCC 700928 / UPEC).